We begin with the raw amino-acid sequence, 417 residues long: Divinyl chlorophyllide a 8-vinyl-reductase, chloroplastic (417 aa).

Residues 1-49 constitute a chloroplast transit peptide; sequence MSLCSSFNVFASYSPKPKTIFKDSKFISQFQVKSSPLASTFHTNESSTS.

In terms of tissue distribution, highly expressed in leaves, stems and flower buds. Detected in roots.

Its subcellular location is the plastid. It is found in the chloroplast. The catalysed reaction is protochlorophyllide a + NADP(+) = 3,8-divinyl protochlorophyllide a + NADPH + H(+). It functions in the pathway porphyrin-containing compound metabolism; chlorophyll biosynthesis. In terms of biological role, catalyzes the conversion of divinyl chlorophyllide to monovinyl chlorophyllide. Reduces the 8-vinyl group of the tetrapyrrole to an ethyl group using NADPH as the reductant. The best substrate is (3,8-divinyl)-chlorophyllide a (DV-Chlidea). Very low activity with (3,8-divinyl)-protochlorophyllide a (DV-Pchlidea) and (3,8-divinyl)-magnesium-protoporphyrin IX monomethyl ester (DV-MPE). No activity with (3,8-divinyl)-chlorophyllide b (DV-Chlideb), (3,8-divinyl)-magnesium-protoporphyrin IX (DV-Mg-Proto) and either (3,8-divinyl)-chlorophyll a (DV-Chla) or b (DV-Chlb). The chain is Divinyl chlorophyllide a 8-vinyl-reductase, chloroplastic (DVR) from Arabidopsis thaliana (Mouse-ear cress).